A 133-amino-acid polypeptide reads, in one-letter code: Fluoride-specific ion channel FluC 3 (133 aa).

The next 3 membrane-spanning stretches (helical) occupy residues 7-27 (ILVL…SGYV), 37-57 (WGTF…AGLG), and 60-80 (LGAI…LLGG). Na(+)-binding residues include glycine 79 and threonine 82. Residues 107–127 (IVASALLCVLAVAAGYGGIMW) form a helical membrane-spanning segment.

It belongs to the fluoride channel Fluc/FEX (TC 1.A.43) family.

The protein localises to the cell inner membrane. The enzyme catalyses fluoride(in) = fluoride(out). Na(+) is not transported, but it plays an essential structural role and its presence is essential for fluoride channel function. Fluoride-specific ion channel. Important for reducing fluoride concentration in the cell, thus reducing its toxicity. This is Fluoride-specific ion channel FluC 3 from Brucella suis biovar 1 (strain 1330).